Reading from the N-terminus, the 360-residue chain is Phospho-N-acetylmuramoyl-pentapeptide-transferase (360 aa).

10 consecutive transmembrane segments (helical) span residues 27–47 (ILGV…VIVL), 73–93 (TMGG…WGDL), 97–117 (YVWV…VDDY), 145–165 (AFYL…VPLF), 168–188 (VAIP…VGTS), 199–219 (GLAI…AYLT), 236–256 (SGEL…FLWF), 263–283 (IFMG…IAVI), 288–308 (LVLF…ILQV), and 337–357 (KVIV…FATL).

It belongs to the glycosyltransferase 4 family. MraY subfamily. Requires Mg(2+) as cofactor.

It localises to the cell inner membrane. The enzyme catalyses UDP-N-acetyl-alpha-D-muramoyl-L-alanyl-gamma-D-glutamyl-meso-2,6-diaminopimeloyl-D-alanyl-D-alanine + di-trans,octa-cis-undecaprenyl phosphate = di-trans,octa-cis-undecaprenyl diphospho-N-acetyl-alpha-D-muramoyl-L-alanyl-D-glutamyl-meso-2,6-diaminopimeloyl-D-alanyl-D-alanine + UMP. Its pathway is cell wall biogenesis; peptidoglycan biosynthesis. Its function is as follows. Catalyzes the initial step of the lipid cycle reactions in the biosynthesis of the cell wall peptidoglycan: transfers peptidoglycan precursor phospho-MurNAc-pentapeptide from UDP-MurNAc-pentapeptide onto the lipid carrier undecaprenyl phosphate, yielding undecaprenyl-pyrophosphoryl-MurNAc-pentapeptide, known as lipid I. The sequence is that of Phospho-N-acetylmuramoyl-pentapeptide-transferase from Marinomonas sp. (strain MWYL1).